Here is a 365-residue protein sequence, read N- to C-terminus: tRNA/tmRNA (uracil-C(5))-methyltransferase (365 aa).

S-adenosyl-L-methionine is bound by residues Q189, Y217, N222, E238, and D298. Residue C323 is the Nucleophile of the active site. The active-site Proton acceptor is the E357.

This sequence belongs to the class I-like SAM-binding methyltransferase superfamily. RNA M5U methyltransferase family. TrmA subfamily.

The enzyme catalyses uridine(54) in tRNA + S-adenosyl-L-methionine = 5-methyluridine(54) in tRNA + S-adenosyl-L-homocysteine + H(+). It carries out the reaction uridine(341) in tmRNA + S-adenosyl-L-methionine = 5-methyluridine(341) in tmRNA + S-adenosyl-L-homocysteine + H(+). Dual-specificity methyltransferase that catalyzes the formation of 5-methyluridine at position 54 (m5U54) in all tRNAs, and that of position 341 (m5U341) in tmRNA (transfer-mRNA). This is tRNA/tmRNA (uracil-C(5))-methyltransferase from Shewanella amazonensis (strain ATCC BAA-1098 / SB2B).